A 184-amino-acid polypeptide reads, in one-letter code: ATP-dependent protease subunit HslV (184 aa).

Thr12 is an active-site residue. Residues Ala167, Cys170, and Thr173 each contribute to the Na(+) site.

This sequence belongs to the peptidase T1B family. HslV subfamily. A double ring-shaped homohexamer of HslV is capped on each side by a ring-shaped HslU homohexamer. The assembly of the HslU/HslV complex is dependent on binding of ATP.

It is found in the cytoplasm. It carries out the reaction ATP-dependent cleavage of peptide bonds with broad specificity.. Its activity is regulated as follows. Allosterically activated by HslU binding. In terms of biological role, protease subunit of a proteasome-like degradation complex believed to be a general protein degrading machinery. The protein is ATP-dependent protease subunit HslV of Wolbachia pipientis subsp. Culex pipiens (strain wPip).